The primary structure comprises 75 residues: Small ribosomal subunit protein bS18 (75 aa).

This sequence belongs to the bacterial ribosomal protein bS18 family. Part of the 30S ribosomal subunit. Forms a tight heterodimer with protein bS6.

In terms of biological role, binds as a heterodimer with protein bS6 to the central domain of the 16S rRNA, where it helps stabilize the platform of the 30S subunit. The polypeptide is Small ribosomal subunit protein bS18 (Buchnera aphidicola subsp. Baizongia pistaciae (strain Bp)).